Reading from the N-terminus, the 272-residue chain is Flt3 receptor-interacting lectin (272 aa).

The signal sequence occupies residues 1-8 (MFPSKVKS). Alpha-D-mannopyranose contacts are provided by Asp-94 and Gly-112. Asn-125 and Asn-131 each carry an N-linked (GlcNAc...) asparagine glycan. Alpha-D-mannopyranose contacts are provided by residues Asn-152 and 237–238 (QD).

The protein belongs to the leguminous lectin family. As to quaternary structure, dimer (alpha/beta)2. Tetramer (alpha/beta)4. Post-translationally, glycosylated at Asn-125 by either a paucimannose type N-glycan (alpha-4) or a single N-acetylglucosamine (alpha-3). Glycosylated at Asn-131 by a paucimannose type N-glycan (alpha-2, alpha-3 and alpha-4). In alpha-2, Asn-125 is deamidated to an Asp, possibly due to the action of intrinsic peptide N-glycosidase (PGNase).

Its subcellular location is the protein storage vacuole lumen. Mannose-binding lectin. Accommodates most effectively a non-reducing terminal alpha-d-mannosyl unit. Strongly precipitates murine IgM but not IgG. The protein is Flt3 receptor-interacting lectin of Lablab purpureus (Hyacinth bean).